A 370-amino-acid polypeptide reads, in one-letter code: Subtilisin-like protease (370 aa).

An N-terminal signal peptide occupies residues 1-17 (MIASIVFFIVLVDGVAT). Active-site charge relay system residues include aspartate 13, histidine 35, and serine 190. Residues 18 to 261 (GSPNALVTDF…FGEVSPSRLE (244 aa)) form the Peptidase S8 domain. Residues 240–370 (RVTDRWTHRN…TTEGTCHGIR (131 aa)) enclose the P/Homo B domain.

It belongs to the peptidase S8 family.

This chain is Subtilisin-like protease (ORF47), found in Ictalurid herpesvirus 1 (strain Auburn) (IcHV-1).